Reading from the N-terminus, the 225-residue chain is ATP synthase subunit a (225 aa).

5 helical membrane-spanning segments follow: residues 16-36, 79-99, 105-125, 176-196, and 202-222; these read LFVY…VAKL, LVAT…IPGF, SLNL…FEGI, LFLL…AYAL, and VLQT…AVAI.

This sequence belongs to the ATPase A chain family. F-type ATPases have 2 components, CF(1) - the catalytic core - and CF(0) - the membrane proton channel. CF(1) has five subunits: alpha(3), beta(3), gamma(1), delta(1), epsilon(1). CF(0) has three main subunits: a(1), b(2) and c(9-12). The alpha and beta chains form an alternating ring which encloses part of the gamma chain. CF(1) is attached to CF(0) by a central stalk formed by the gamma and epsilon chains, while a peripheral stalk is formed by the delta and b chains.

The protein localises to the cell inner membrane. Its function is as follows. Key component of the proton channel; it plays a direct role in the translocation of protons across the membrane. The protein is ATP synthase subunit a of Campylobacter curvus (strain 525.92).